Here is a 501-residue protein sequence, read N- to C-terminus: MPSTNASRKGQEKPREIVDAAEDYAKERYGISSMIQSQEKPDRVLVRVKDLTVQKADDVVWVRARVHTSRAKGKQCFLVLRQQQFNVQALVAVGDHASKQMVKFAANINKESIIDVEGVVRKVNQKIGSCTQQDVELHVQKIYVISLAEPRLPLQLDDAIRPEVEGEEDGRATVNQDTRLDNRVIDLRTSTSQAIFRLQSGICHLFRETLINKGFVEIQTPKIISAASEGGANVFTVSYFKNNAYLAQSPQLYKQMCICADFEKVFCIGPVFRAEDSNTHRHLTEFVGLDIEMAFNYHYHEVVEEIADTLVQIFKGLQERFQTEIQTVSKQFPCEPFKFLEPTLRLEYCEALAMLREAGVEMDDEEDLSTPNEKLLGRLVKEKYDTDFYVLDKYPLAVRPFYTMPDPRNPKQSNSYDMFMRGEEILSGAQRIHDPQLLTERALHHGIDLEKIKAYIDSFRFGAPPHAGGGIGLERVTMLFLGLHNVRQTSMFPRDPKRLTP.

Thr52 carries the post-translational modification Phosphothreonine. At Lys74 the chain carries N6-acetyllysine. Position 229 (Glu229) interacts with L-aspartate. Ser249 carries the post-translational modification Phosphoserine. Positions 251 to 254 (QLYK) are aspartate. L-aspartate is bound at residue Arg273. ATP contacts are provided by residues 273–275 (RAE) and 281–283 (RHL). An N6-acetyllysine modification is found at Lys374. Glu424 serves as a coordination point for ATP. The L-aspartate site is built by Ser427 and Arg431. 472–475 (GLER) lines the ATP pocket.

The protein belongs to the class-II aminoacyl-tRNA synthetase family. Type 2 subfamily. As to quaternary structure, homodimer. Part of a multisubunit complex that groups tRNA ligases for Arg (RARS1), Asp (DARS1), Gln (QARS1), Ile (IARS1), Leu (LARS1), Lys (KARS1), Met (MARS1) the bifunctional ligase for Glu and Pro (EPRS1) and the auxiliary subunits AIMP1/p43, AIMP2/p38 and EEF1E1/p18.

Its subcellular location is the cytoplasm. The enzyme catalyses tRNA(Asp) + L-aspartate + ATP = L-aspartyl-tRNA(Asp) + AMP + diphosphate. In terms of biological role, catalyzes the specific attachment of an amino acid to its cognate tRNA in a 2 step reaction: the amino acid (AA) is first activated by ATP to form AA-AMP and then transferred to the acceptor end of the tRNA. This Mus musculus (Mouse) protein is Aspartate--tRNA ligase, cytoplasmic (Dars1).